The sequence spans 596 residues: Glomulin (596 aa).

Ala2 is modified (N-acetylalanine). The interval 2–555 (AVEELQSIIK…EEIPSMPPEM (554 aa)) is alpha-helical region with structural similarity to HEAT repeats. The interval 299–596 (IDQLPMVLSP…STSEENVGIK (298 aa)) is important for interaction with RBX1.

Interacts with FKBP4 and FKBP1A. Interacts with RBX1 (via RING domain). Identified in complexes that contain RBX1 plus one of the cullins CUL1, CUL2, CUL3, and CUL4A. Identified in a SCF complex composed of CUL1, RBX1, SKP1, FBXW7 and GLMN. Component of a SCF-like complex consisting of CUL7, RBX1, SKP1, FBXW8 and GLMN. Interacts with unphosphorylated MET and is released upon MET phosphorylation. In terms of processing, phosphorylated on tyrosine residues. Ubiquitous. Detected in embryonic vasculature and embryonic perichondrium, and in adult eye, brain, heart, testis, kidney, smooth muscle and skeletal muscle.

Functionally, regulatory component of cullin-RING-based SCF (SKP1-Cullin-F-box protein) E3 ubiquitin-protein ligase complexes. Inhibits E3 ubiquitin ligase activity by binding to the RING domain of RBX1 and inhibiting its interaction with the E2 ubiquitin-conjugating enzyme CDC34. Inhibits RBX1-mediated neddylation of CUL1. Required for normal stability and normal cellular levels of key components of SCF ubiquitin ligase complexes, including FBXW7, RBX1, CUL1, CUL2, CUL3, CUL4A, and thereby contributes to the regulation of CCNE1 and MYC levels. Essential for normal development of the vasculature. Contributes to the regulation of RPS6KB1 phosphorylation. The polypeptide is Glomulin (Glmn) (Mus musculus (Mouse)).